The chain runs to 148 residues: Early glycoprotein GP48 (148 aa).

The first 21 residues, 1–21 (MMLRAWRLMVLLAAYCYYVFA), serve as a signal peptide directing secretion. N-linked (GlcNAc...) asparagine; by host glycosylation is found at Asn22, Asn44, Asn49, Asn57, Asn65, Asn104, Asn108, Asn118, Asn135, and Asn144.

It belongs to the RL11 family. N-glycosylated and possibly O-glycosylated.

It is found in the virion membrane. The chain is Early glycoprotein GP48 (UL4) from Homo sapiens (Human).